The sequence spans 277 residues: Mitochondrial outer membrane protein porin 5 (277 aa).

Belongs to the eukaryotic mitochondrial porin (TC 1.B.8.1) family.

It is found in the mitochondrion outer membrane. In terms of biological role, forms a channel through the mitochondrial outer membrane that allows diffusion of small hydrophilic molecules. The channel adopts an open conformation at low or zero membrane potential and a closed conformation at potentials above 30-40 mV. The open state has a weak anion selectivity whereas the closed state is cation-selective. The protein is Mitochondrial outer membrane protein porin 5 (VDAC5) of Oryza sativa subsp. japonica (Rice).